The sequence spans 317 residues: Cytochrome f (317 aa).

The N-terminal stretch at 1 to 31 (MIFKPQSFLKAIVLSMTITFAFNMSAPIASA) is a signal peptide. The heme site is built by Tyr32, Cys52, Cys55, and His56. A helical transmembrane segment spans residues 280 to 302 (PVRIQGLLAFFACILLAQILLVV).

The protein belongs to the cytochrome f family. The 4 large subunits of the cytochrome b6-f complex are cytochrome b6, subunit IV (17 kDa polypeptide, petD), cytochrome f and the Rieske protein, while the 4 small subunits are PetG, PetL, PetM and PetN. The complex functions as a dimer. Requires heme as cofactor.

It localises to the plastid. The protein resides in the chloroplast thylakoid membrane. Functionally, component of the cytochrome b6-f complex, which mediates electron transfer between photosystem II (PSII) and photosystem I (PSI), cyclic electron flow around PSI, and state transitions. The polypeptide is Cytochrome f (Chlamydomonas subcaudata).